The chain runs to 444 residues: Trigger factor (444 aa).

A PPIase FKBP-type domain is found at Asn-170–Thr-255.

Belongs to the FKBP-type PPIase family. Tig subfamily.

Its subcellular location is the cytoplasm. It catalyses the reaction [protein]-peptidylproline (omega=180) = [protein]-peptidylproline (omega=0). Its function is as follows. Involved in protein export. Acts as a chaperone by maintaining the newly synthesized protein in an open conformation. Functions as a peptidyl-prolyl cis-trans isomerase. In Mycoplasma pneumoniae (strain ATCC 29342 / M129 / Subtype 1) (Mycoplasmoides pneumoniae), this protein is Trigger factor (tig).